A 102-amino-acid polypeptide reads, in one-letter code: Small ribosomal subunit protein uS10 (102 aa).

It belongs to the universal ribosomal protein uS10 family. In terms of assembly, part of the 30S ribosomal subunit.

Involved in the binding of tRNA to the ribosomes. The sequence is that of Small ribosomal subunit protein uS10 from Leptospira biflexa serovar Patoc (strain Patoc 1 / Ames).